A 248-amino-acid chain; its full sequence is 1-(5-phosphoribosyl)-5-[(5-phosphoribosylamino)methylideneamino] imidazole-4-carboxamide isomerase (248 aa).

Asp8 functions as the Proton acceptor in the catalytic mechanism. The active-site Proton donor is the Asp129.

The protein belongs to the HisA/HisF family.

The protein resides in the cytoplasm. It carries out the reaction 1-(5-phospho-beta-D-ribosyl)-5-[(5-phospho-beta-D-ribosylamino)methylideneamino]imidazole-4-carboxamide = 5-[(5-phospho-1-deoxy-D-ribulos-1-ylimino)methylamino]-1-(5-phospho-beta-D-ribosyl)imidazole-4-carboxamide. The protein operates within amino-acid biosynthesis; L-histidine biosynthesis; L-histidine from 5-phospho-alpha-D-ribose 1-diphosphate: step 4/9. This chain is 1-(5-phosphoribosyl)-5-[(5-phosphoribosylamino)methylideneamino] imidazole-4-carboxamide isomerase, found in Rhizobium etli (strain CIAT 652).